A 415-amino-acid chain; its full sequence is Styrene monooxygenase StyA (415 aa).

Belongs to the StyA family. Homodimer. A direct interaction with the monooxygenase reductase component StyB seems not to be necessary for the enzymatic activity.

It carries out the reaction styrene + FADH2 + O2 = (S)-styrene oxide + FAD + H2O + H(+). The protein operates within aromatic compound metabolism. Its function is as follows. Styrene monooxygenase which catalyzes the first step in the aerobic styrene degradation pathway by enantioselective epoxidation of the vinyl side chain. In a two-component system, a reductase utilizes NADH to reduce FAD, which is then transferred to the oxygenase; the electron transfer is proposed to occur via a diffusing flavin. The sequence is that of Styrene monooxygenase StyA (styA) from Pseudomonas sp.